We begin with the raw amino-acid sequence, 385 residues long: Chaperone protein DnaJ (385 aa).

A J domain is found at 5 to 72 (DYYEVLGVGK…QKRAAYDQFG (68 aa)). Positions 26-48 (RKLAMKHHPDRNQGDGAKASEEK) are disordered. Positions 35-48 (DRNQGDGAKASEEK) are enriched in basic and acidic residues. The segment at 145 to 223 (GKESQIRIPT…CNGAGKVKKQ (79 aa)) adopts a CR-type zinc-finger fold. Cys-158, Cys-161, Cys-175, Cys-178, Cys-197, Cys-200, Cys-211, and Cys-214 together coordinate Zn(2+). 4 CXXCXGXG motif repeats span residues 158–165 (CDTCHGSG), 175–182 (CTTCHGAG), 197–204 (CPHCHGSG), and 211–218 (CTSCNGAG). The segment at 362 to 385 (FRKGGDKHSPTSKSWTDRVKDLFK) is disordered.

This sequence belongs to the DnaJ family. Homodimer. The cofactor is Zn(2+).

Its subcellular location is the cytoplasm. Functionally, participates actively in the response to hyperosmotic and heat shock by preventing the aggregation of stress-denatured proteins and by disaggregating proteins, also in an autonomous, DnaK-independent fashion. Unfolded proteins bind initially to DnaJ; upon interaction with the DnaJ-bound protein, DnaK hydrolyzes its bound ATP, resulting in the formation of a stable complex. GrpE releases ADP from DnaK; ATP binding to DnaK triggers the release of the substrate protein, thus completing the reaction cycle. Several rounds of ATP-dependent interactions between DnaJ, DnaK and GrpE are required for fully efficient folding. Also involved, together with DnaK and GrpE, in the DNA replication of plasmids through activation of initiation proteins. This Leptothrix cholodnii (strain ATCC 51168 / LMG 8142 / SP-6) (Leptothrix discophora (strain SP-6)) protein is Chaperone protein DnaJ.